We begin with the raw amino-acid sequence, 154 residues long: 6,7-dimethyl-8-ribityllumazine synthase (154 aa).

5-amino-6-(D-ribitylamino)uracil contacts are provided by residues Phe22, 57–59, and 81–83; these read AYE and AVI. 86 to 87 contributes to the (2S)-2-hydroxy-3-oxobutyl phosphate binding site; that stretch reads GT. His89 functions as the Proton donor in the catalytic mechanism. Phe114 lines the 5-amino-6-(D-ribitylamino)uracil pocket. Arg128 contacts (2S)-2-hydroxy-3-oxobutyl phosphate.

It belongs to the DMRL synthase family. In terms of assembly, forms an icosahedral capsid composed of 60 subunits, arranged as a dodecamer of pentamers.

The catalysed reaction is (2S)-2-hydroxy-3-oxobutyl phosphate + 5-amino-6-(D-ribitylamino)uracil = 6,7-dimethyl-8-(1-D-ribityl)lumazine + phosphate + 2 H2O + H(+). The protein operates within cofactor biosynthesis; riboflavin biosynthesis; riboflavin from 2-hydroxy-3-oxobutyl phosphate and 5-amino-6-(D-ribitylamino)uracil: step 1/2. In terms of biological role, catalyzes the formation of 6,7-dimethyl-8-ribityllumazine by condensation of 5-amino-6-(D-ribitylamino)uracil with 3,4-dihydroxy-2-butanone 4-phosphate. This is the penultimate step in the biosynthesis of riboflavin. The sequence is that of 6,7-dimethyl-8-ribityllumazine synthase from Colwellia psychrerythraea (strain 34H / ATCC BAA-681) (Vibrio psychroerythus).